We begin with the raw amino-acid sequence, 245 residues long: PF03932 family protein CutC (245 aa).

Belongs to the CutC family.

It is found in the cytoplasm. The protein is PF03932 family protein CutC of Rhizobium meliloti (strain 1021) (Ensifer meliloti).